We begin with the raw amino-acid sequence, 771 residues long: Endoplasmin homolog (771 aa).

The N-terminal stretch at 1–24 is a signal peptide; it reads MANSSLLRVVLVALLLLGSVTVSA. Positions 63, 109, and 160 each coordinate ATP. Asparagine 63 carries N-linked (GlcNAc...) asparagine glycosylation. The tract at residues 253–282 is disordered; sequence TAATPEPAAEEGSLDEGAVEEDPDKEGDTQ. The span at 260–277 shows a compositional bias: acidic residues; it reads AAEEGSLDEGAVEEDPDK. Residues asparagine 306 and asparagine 402 are each glycosylated (N-linked (GlcNAc...) asparagine). The tract at residues 727-771 is disordered; sequence ADDSLLPPDDAEYTVSDTEAEEEEEQPKVDANADEEAEAVGEDDL. The span at 758–771 shows a compositional bias: acidic residues; the sequence is NADEEAEAVGEDDL. The short motif at 768 to 771 is the Prevents secretion from ER element; the sequence is EDDL.

It belongs to the heat shock protein 90 family. As to quaternary structure, homotetramer.

It localises to the endoplasmic reticulum. In terms of biological role, molecular chaperone that functions in the processing and transport of secreted proteins. Required for the synthesis of lipophosphoglycan (LPG), a cell surface glycoconjugate. Necessary for the attachment of the galactosyl residue to the mannose within the phosphoglycan repeats of the nascent LPG chain. Also required for addition of phosphoglycan to acid phosphatase. Not required for normal growth. Has ATPase activity. Binds heparin with micromolar affinity which may facilitate infection of host cells. The sequence is that of Endoplasmin homolog from Leishmania infantum.